The primary structure comprises 195 residues: Putative NADH dehydrogenase/NAD(P)H nitroreductase Caul_0018 (195 aa).

Belongs to the nitroreductase family. HadB/RutE subfamily. Requires FMN as cofactor.

This chain is Putative NADH dehydrogenase/NAD(P)H nitroreductase Caul_0018, found in Caulobacter sp. (strain K31).